Here is a 790-residue protein sequence, read N- to C-terminus: Pentatricopeptide repeat-containing protein OTP51, chloroplastic (790 aa).

Residues 1 to 56 (MATTSPCAAPSPSLRCPLALSHPFASPPPPPALRLAGPKLLPGRLAVSPPPGIPAV) constitute a chloroplast transit peptide. 10 PPR repeats span residues 182–216 (NFALATRVADCLGRDGKVEKCREVFEAMVKQGRVP), 217–254 (AESTFHILIVAYLSVPKGRCLEEACTIYNQMIQMGGYK), 256–296 (RLSL…NLDV), 299–333 (DVYAGLIWLHSYQDVIDRERIIALRKEMKQAGFDE), 334–368 (GIDVLVSVMRAFSKEGNVAETEATWHNILQSGSDL), 369–403 (PVQAYVCRMEAYARTGEPMKSLDMFKEMKDKNIPP), 404–438 (NVASYHKIIEIMTKALEVDIVEQLMNEFIESDMKH), 439–469 (LMPAFLDLMYMYMDLDMHEKLELTFLKCIAR), 473–507 (NRILYTIYLESLVKVGNIEKAEEVFGEMHNNGMIG), and 509–543 (NTKSCNIMLRGYLSAEDYQKAEKVYDMMSKKKYDV). Residues 762-790 (GSSIGSDGTQDTDTDSDDDMQMSDTERDE) form a disordered region. Residues 771 to 790 (QDTDTDSDDDMQMSDTERDE) show a composition bias toward acidic residues.

This sequence belongs to the PPR family. P subfamily.

Its subcellular location is the plastid. It is found in the chloroplast. Functionally, promotes the splicing of group II introns in chloroplasts. Required for the splicing of intron 2 of plastid ycf3 transcripts, a factor required for the assembly of photosystem I (PSI). Involved in the splicing of atpF, ndhA, petB and rps16 chloroplastic transcripts. Required for the assembly of PSI. The polypeptide is Pentatricopeptide repeat-containing protein OTP51, chloroplastic (Oryza sativa subsp. japonica (Rice)).